We begin with the raw amino-acid sequence, 106 residues long: Cell division protein FtsB (106 aa).

Topologically, residues M1–K3 are cytoplasmic. The helical transmembrane segment at L4–L21 threads the bilayer. Topologically, residues G22 to K106 are periplasmic. A coiled-coil region spans residues Q40–G62.

This sequence belongs to the FtsB family. In terms of assembly, part of a complex composed of FtsB, FtsL and FtsQ.

Its subcellular location is the cell inner membrane. Functionally, essential cell division protein. May link together the upstream cell division proteins, which are predominantly cytoplasmic, with the downstream cell division proteins, which are predominantly periplasmic. The sequence is that of Cell division protein FtsB from Serratia proteamaculans (strain 568).